Here is a 20-residue protein sequence, read N- to C-terminus: Trypsin inhibitor A chain (20 aa).

Belongs to the protease inhibitor I3 (leguminous Kunitz-type inhibitor) family. Heterodimer of an 'A' and a 'B' chain linked by a disulfide bond.

Inhibits trypsin and alpha-chymotrypsin. In Albizia julibrissin (Silk tree), this protein is Trypsin inhibitor A chain.